A 156-amino-acid chain; its full sequence is MMPGQIPDPLVTAGSLPSVGPLAGFPATTLTEQLKLAELYRLGTVLSPLMLNRHAKRPFDAIKSEDDDDDERKKRRREKNKVAAARCRNRKKERTDFLQKESERLEMLNSDLKSQIEELKSERQQLIVMLNLHRPTCIVRTDSVKSDEHPLEPRED.

The segment at 56-95 (KRPFDAIKSEDDDDDERKKRRREKNKVAAARCRNRKKERT) is disordered. Positions 70 to 133 (DERKKRRREK…QQLIVMLNLH (64 aa)) constitute a bZIP domain. A basic motif region spans residues 72–94 (RKKRRREKNKVAAARCRNRKKER). The segment at 98 to 126 (LQKESERLEMLNSDLKSQIEELKSERQQL) is leucine-zipper.

This sequence belongs to the bZIP family. ATF subfamily.

It localises to the nucleus. Its function is as follows. Component of the AP-1 transcription factor that represses transactivation mediated by the Jun family of proteins. This chain is Jun dimerization protein 2 (jdp2), found in Danio rerio (Zebrafish).